The primary structure comprises 862 residues: Alpha,alpha-trehalose-phosphate synthase [UDP-forming] 5 (862 aa).

Phosphoserine is present on S5. T32 carries the post-translational modification Phosphothreonine. The tract at residues D60–R546 is glycosyltransferase.

In the N-terminal section; belongs to the glycosyltransferase 20 family. This sequence in the C-terminal section; belongs to the trehalose phosphatase family. Binds to the phosphopeptide-binding site of GRF/14-3-3 and to MBF1c. In terms of processing, both Ser-5 and Thr-32 must be phosphorylated for binding to GRF/14-3-3. As to expression, low expression in leaves, stems, flower buds, flowers and siliques.

It carries out the reaction D-glucose 6-phosphate + UDP-alpha-D-glucose = alpha,alpha-trehalose 6-phosphate + UDP + H(+). This chain is Alpha,alpha-trehalose-phosphate synthase [UDP-forming] 5 (TPS5), found in Arabidopsis thaliana (Mouse-ear cress).